The sequence spans 287 residues: Urease accessory protein UreD (287 aa).

It belongs to the UreD family. In terms of assembly, ureD, UreF and UreG form a complex that acts as a GTP-hydrolysis-dependent molecular chaperone, activating the urease apoprotein by helping to assemble the nickel containing metallocenter of UreC. The UreE protein probably delivers the nickel.

The protein localises to the cytoplasm. Functionally, required for maturation of urease via the functional incorporation of the urease nickel metallocenter. The polypeptide is Urease accessory protein UreD (Ureaplasma parvum serovar 3 (strain ATCC 27815 / 27 / NCTC 11736)).